Here is a 416-residue protein sequence, read N- to C-terminus: MVFIEDVEAHEVLDSRGNPTVRATVRLSDGTEASAIVPSGASTGKREALELRDKDDRYAGKGVLKAVSNVNEKIAEAVIGLDAYNQKAVDAEMLELDGTHNYSNLGANAVLGVSMAVARAAAKSLNIPLYRYLGGANASILPVPMFNIINGGAHANNSVDFQEFMIMPFGFSTFSEALRAATEIYHKLKSILNAAGHSTAVGDEGGFAPNLKDNEEPLKLISQAVKEAGYELGSQIKLALDVASSELYKDGKYELEGKKFSSAELISYYEKLCEKYPIFSIEDGLSEDDWSGWAELTKRLGSKVQLVGDDLFVTNEKILREGIEKNIANAILIKPNQIGSVTQTMQTVRLAQRNGYRCIMSHRSGESEDAFIADFAVALNTGEIKTGATSRSERNAKYNRLLEIELEAGEFLGDNI.

Glutamine 162 lines the (2R)-2-phosphoglycerate pocket. The active-site Proton donor is glutamate 204. Residues aspartate 241, glutamate 282, and aspartate 309 each coordinate Mg(2+). Lysine 334, arginine 363, serine 364, and lysine 385 together coordinate (2R)-2-phosphoglycerate. Lysine 334 functions as the Proton acceptor in the catalytic mechanism.

Belongs to the enolase family. Mg(2+) is required as a cofactor.

It localises to the cytoplasm. Its subcellular location is the secreted. The protein localises to the cell surface. The catalysed reaction is (2R)-2-phosphoglycerate = phosphoenolpyruvate + H2O. It functions in the pathway carbohydrate degradation; glycolysis; pyruvate from D-glyceraldehyde 3-phosphate: step 4/5. Its function is as follows. Catalyzes the reversible conversion of 2-phosphoglycerate (2-PG) into phosphoenolpyruvate (PEP). It is essential for the degradation of carbohydrates via glycolysis. The sequence is that of Enolase from Campylobacter concisus (strain 13826).